Consider the following 623-residue polypeptide: Leucine aminopeptidase 2 (623 aa).

Residues 1–23 form a disordered region; the sequence is MRRCTKNSRSTNPPRDPNTLSNY. Polar residues predominate over residues 7–23; sequence NSRSTNPPRDPNTLSNY. A peptide-binding positions include 145 to 147 and 277 to 282; these read QCQ and PYGGME. Residue histidine 306 coordinates Zn(2+). The Proton acceptor role is filled by glutamate 307. Residues histidine 310 and glutamate 329 each contribute to the Zn(2+) site. Residue tyrosine 394 is the Proton donor of the active site.

This sequence belongs to the peptidase M1 family. Requires Zn(2+) as cofactor.

It is found in the cytoplasm. Its subcellular location is the nucleus. It catalyses the reaction an epoxide + H2O = an ethanediol. Aminopeptidase that preferentially cleaves di- and tripeptides. Also has low epoxide hydrolase activity (in vitro). Can hydrolyze the epoxide leukotriene LTA(4) but it forms preferentially 5,6-dihydroxy-7,9,11,14-eicosatetraenoic acid rather than the cytokine leukotriene B(4) as the product compared to the homologous mammalian enzyme (in vitro). The chain is Leucine aminopeptidase 2 from Ajellomyces capsulatus (strain NAm1 / WU24) (Darling's disease fungus).